The sequence spans 147 residues: Hemoglobin subunit epsilon-1 (147 aa).

In terms of domain architecture, Globin spans 3–147 (HFTAEEKAAI…VATALAHKYH (145 aa)). 2 residues coordinate heme b: His-64 and His-93.

Belongs to the globin family. In terms of assembly, heterotetramer of two epsilon chains and two alpha chains. Red blood cells.

Functionally, beta-type chain found in early embryos. This chain is Hemoglobin subunit epsilon-1 (HBE1), found in Capra hircus (Goat).